The chain runs to 563 residues: Arginine--tRNA ligase (563 aa).

A 'HIGH' region motif is present at residues 121–131 (PNIAKPFSIGH).

Belongs to the class-I aminoacyl-tRNA synthetase family. In terms of assembly, monomer.

The protein resides in the cytoplasm. The enzyme catalyses tRNA(Arg) + L-arginine + ATP = L-arginyl-tRNA(Arg) + AMP + diphosphate. In Streptococcus pyogenes serotype M6 (strain ATCC BAA-946 / MGAS10394), this protein is Arginine--tRNA ligase.